The sequence spans 511 residues: MSKQPVALIILDGFALRDETYGNAVAQANKPNFDRYWNEYPHTMLKACGEAVGLPEGQMGNSEVGHLNIGAGRIVYQSLTRVNIAIREGEFDRNETFLAAMNHVKQHGTSLHLFGLLSDGGVHSHIHHLYALLRLAAKEGVKRVYIHGFLDGRDVGPQTAPQYIKELQEKIKEYGVGEIATLSGRYYSMDRDKRWDRVEKAYRAMVYGEGPTYRDPLECIEDSYKHGIYDEFVLPSVIVREDGRPVATIQDNDAIIFYNFRPDRAIQISNTFTNEDFREFDRGPKHPKHLFFVCLTHFSETVKGYVAFKPTNLDNTLGEVLSQHGLRQLRIAETEKYPHVTFFMSGGREEKFPGEDRILINSPKVPTYDLKPEMSAYEVTDALLKEIEADKYDAIILNYANPDMVGHSGKLEPTIKAVEAVDECLGKVVDAILAKGGIAIITADHGNADEVLTPDGKPQTAHTTNPVPVIVTKKGIKLRDGGILGDLAPTMLDLLGLPQPKEMTGKSLIVK.

A Mn(2+)-binding site is contributed by aspartate 12. Tyrosine 36 carries the phosphotyrosine modification. Residue serine 62 participates in Mn(2+) binding. The active-site Phosphoserine intermediate is the serine 62. Substrate-binding positions include histidine 123, 153–154 (RD), arginine 185, arginine 191, 261–264 (RPDR), and lysine 336. 5 residues coordinate Mn(2+): aspartate 403, histidine 407, aspartate 444, histidine 445, and histidine 462.

This sequence belongs to the BPG-independent phosphoglycerate mutase family. As to quaternary structure, monomer. Mn(2+) serves as cofactor.

It catalyses the reaction (2R)-2-phosphoglycerate = (2R)-3-phosphoglycerate. Its pathway is carbohydrate degradation; glycolysis; pyruvate from D-glyceraldehyde 3-phosphate: step 3/5. Catalyzes the interconversion of 2-phosphoglycerate and 3-phosphoglycerate. The protein is 2,3-bisphosphoglycerate-independent phosphoglycerate mutase of Geobacillus kaustophilus (strain HTA426).